Reading from the N-terminus, the 230-residue chain is Modulator of macroautophagy TMEM150B (230 aa).

Residue Met1 is a topological domain, cytoplasmic. The chain crosses the membrane as a helical span at residues 2–22 (WAWALLPICLTIWATAGIWIV). Topologically, residues 23–50 (YGMSVSNGSVNLTDGFPFISLCGTYPPQ) are extracellular. N-linked (GlcNAc...) asparagine glycosylation is found at Asn29 and Asn33. The helical transmembrane segment at 51–71 (SCVFGQVLNVGAMLGVWISVI) threads the bilayer. Topologically, residues 72-83 (RFQQIRDYGCHS) are cytoplasmic. A helical membrane pass occupies residues 84–104 (VLNSVSLAMGLLCALGTSIVG). Residues 105-115 (NFQQSNQLETH) are Extracellular-facing. The helical transmembrane segment at 116–136 (LAGAFLAFVIGNIYFWMQTVL) threads the bilayer. At 137-150 (TYMVKPKHGGCYIG) the chain is on the cytoplasmic side. The helical transmembrane segment at 151–171 (PIRFCLSVACTALIVLMAVFL) threads the bilayer. Residues 172-183 (KLNMKSISAICE) lie on the Extracellular side of the membrane. Residues 184–204 (WIVAMILFLLYGLFSVDFWHL) form a helical membrane-spanning segment. At 205-230 (DGHYFHVKKRTAIPNEVEVSTVTLNI) the chain is on the cytoplasmic side.

The protein belongs to the DRAM/TMEM150 family.

It localises to the cell membrane. It is found in the endosome membrane. Its subcellular location is the cytoplasmic vesicle. The protein localises to the autophagosome membrane. In terms of biological role, modulator of macroautophagy that causes accumulation of autophagosomes under basal conditions and enhances autophagic flux. Represses cell death and promotes long-term clonogenic survival of cells grown in the absence of glucose in a macroautophagy-independent manner. May have some role in extracellular matrix engulfment or growth factor receptor recycling, both of which can modulate cell survival. The sequence is that of Modulator of macroautophagy TMEM150B from Xenopus tropicalis (Western clawed frog).